The chain runs to 238 residues: Ribosomal RNA small subunit methyltransferase G (238 aa).

Residues glycine 99, leucine 104, 122–124 (DAT), 150–151 (VE), and arginine 164 contribute to the S-adenosyl-L-methionine site.

This sequence belongs to the methyltransferase superfamily. RNA methyltransferase RsmG family.

The protein resides in the cytoplasm. Functionally, specifically methylates the N7 position of a guanine in 16S rRNA. The protein is Ribosomal RNA small subunit methyltransferase G of Chlorobium luteolum (strain DSM 273 / BCRC 81028 / 2530) (Pelodictyon luteolum).